The sequence spans 226 residues: MTQDELKQAVAQAALDYILPHLEDDMILGIGTGSTARLFIDLLAAHKGKFDGAVSSSEASSEQLKGHGIPVYDLNSVDSLPFYIDGADEANAQLHLIKGGGAALTREKIITAVADKFICIADASKDVDVLGKFPLPVEVIPMARAHVAREIVKLGGNPVHRQDCVTDNGCQILDVYDLAIHDAPALEAKLNNIAGVVTNGLFALRPADVLLLGTTNGVETRFAAKP.

Substrate is bound by residues 32-35, 85-88, and 98-101; these read TGST, DGAD, and KGGG. Glutamate 107 (proton acceptor) is an active-site residue. Lysine 125 serves as a coordination point for substrate.

This sequence belongs to the ribose 5-phosphate isomerase family. As to quaternary structure, homodimer.

It carries out the reaction aldehydo-D-ribose 5-phosphate = D-ribulose 5-phosphate. It functions in the pathway carbohydrate degradation; pentose phosphate pathway; D-ribose 5-phosphate from D-ribulose 5-phosphate (non-oxidative stage): step 1/1. Functionally, catalyzes the reversible conversion of ribose-5-phosphate to ribulose 5-phosphate. The polypeptide is Ribose-5-phosphate isomerase A (Saccharophagus degradans (strain 2-40 / ATCC 43961 / DSM 17024)).